We begin with the raw amino-acid sequence, 134 residues long: Protein TraK (134 aa).

Residues 74 to 134 (HIKAKPADVP…NPTPDKKDLL (61 aa)) form a disordered region. The span at 83 to 92 (PAPQAKAAEP) shows a compositional bias: low complexity. The segment covering 99–112 (PEPRRPKQGGKAEK) has biased composition (basic and acidic residues).

This chain is Protein TraK (traK), found in Escherichia coli.